The following is a 415-amino-acid chain: Serine hydroxymethyltransferase 1 (415 aa).

(6S)-5,6,7,8-tetrahydrofolate-binding positions include L122 and 126 to 128 (GHL). Position 230 is an N6-(pyridoxal phosphate)lysine (K230).

It belongs to the SHMT family. Homodimer. Pyridoxal 5'-phosphate is required as a cofactor.

It localises to the cytoplasm. The catalysed reaction is (6R)-5,10-methylene-5,6,7,8-tetrahydrofolate + glycine + H2O = (6S)-5,6,7,8-tetrahydrofolate + L-serine. It participates in one-carbon metabolism; tetrahydrofolate interconversion. It functions in the pathway amino-acid biosynthesis; glycine biosynthesis; glycine from L-serine: step 1/1. Its function is as follows. Catalyzes the reversible interconversion of serine and glycine with tetrahydrofolate (THF) serving as the one-carbon carrier. This reaction serves as the major source of one-carbon groups required for the biosynthesis of purines, thymidylate, methionine, and other important biomolecules. Also exhibits THF-independent aldolase activity toward beta-hydroxyamino acids, producing glycine and aldehydes, via a retro-aldol mechanism. In Burkholderia mallei (strain ATCC 23344), this protein is Serine hydroxymethyltransferase 1.